The primary structure comprises 362 residues: Glutamate 5-kinase (362 aa).

Residue Lys3 coordinates ATP. Substrate-binding residues include Ser43, Asp128, and Asn140. Residues 160-161 (TD) and 202-208 (TGGMRTK) contribute to the ATP site. The 82-residue stretch at 267-348 (AGAILVDAGA…RDIENVLGYS (82 aa)) folds into the PUA domain.

This sequence belongs to the glutamate 5-kinase family.

The protein resides in the cytoplasm. It catalyses the reaction L-glutamate + ATP = L-glutamyl 5-phosphate + ADP. It participates in amino-acid biosynthesis; L-proline biosynthesis; L-glutamate 5-semialdehyde from L-glutamate: step 1/2. Its function is as follows. Catalyzes the transfer of a phosphate group to glutamate to form L-glutamate 5-phosphate. The chain is Glutamate 5-kinase from Xanthomonas oryzae pv. oryzae (strain MAFF 311018).